Consider the following 230-residue polypeptide: Sperm-associated antigen 7 homolog (230 aa).

Residues 1 to 45 (MADLLGSILSSMEKPPTVHDQESRRKAREQAARLKKLEEDERRKK) are disordered. Positions 16 to 45 (PTVHDQESRRKAREQAARLKKLEEDERRKK) are enriched in basic and acidic residues. One can recognise an R3H domain in the interval 46–109 (AEFRKKMEKE…ESRYVMLFKK (64 aa)). Over residues 119 to 144 (EAYRKGEEWDPQKAEERRRLKEKAAL) the composition is skewed to basic and acidic residues. Disordered stretches follow at residues 119-169 (EAYR…KYSH) and 185-230 (ANRA…GSSV). S158 carries the phosphoserine modification. The span at 196-211 (NKRDTRSIEEAMNEIR) shows a compositional bias: basic and acidic residues.

The sequence is that of Sperm-associated antigen 7 homolog (spag7) from Danio rerio (Zebrafish).